We begin with the raw amino-acid sequence, 285 residues long: GTP-binding protein 8 (285 aa).

One can recognise an EngB-type G domain in the interval 110–283 (RQPEVCFIGR…KCFIADITGS (174 aa)). GTP-binding positions include 118–125 (GRSNVGKS), 147–151 (GHTKK), 165–168 (DMPG), 227–230 (TKID), and 262–264 (ISA). S125 and T149 together coordinate Mg(2+).

Belongs to the TRAFAC class TrmE-Era-EngA-EngB-Septin-like GTPase superfamily. EngB GTPase family. Mg(2+) serves as cofactor.

The polypeptide is GTP-binding protein 8 (Gtpbp8) (Rattus norvegicus (Rat)).